A 324-amino-acid polypeptide reads, in one-letter code: Glyoxylate/hydroxypyruvate reductase B (324 aa).

Active-site residues include Arg237 and Glu266. The active-site Proton donor is His285.

This sequence belongs to the D-isomer specific 2-hydroxyacid dehydrogenase family. GhrB subfamily. Homodimer.

The protein localises to the cytoplasm. It catalyses the reaction glycolate + NADP(+) = glyoxylate + NADPH + H(+). It carries out the reaction (R)-glycerate + NAD(+) = 3-hydroxypyruvate + NADH + H(+). The enzyme catalyses (R)-glycerate + NADP(+) = 3-hydroxypyruvate + NADPH + H(+). In terms of biological role, catalyzes the NADPH-dependent reduction of glyoxylate and hydroxypyruvate into glycolate and glycerate, respectively. This is Glyoxylate/hydroxypyruvate reductase B from Salmonella heidelberg (strain SL476).